Reading from the N-terminus, the 381-residue chain is tRNA pseudouridine synthase D (381 aa).

Aspartate 81 acts as the Nucleophile in catalysis. In terms of domain architecture, TRUD spans 160-335 (GMPNYFGSQR…TLGSRRFFWV (176 aa)).

This sequence belongs to the pseudouridine synthase TruD family.

The enzyme catalyses uridine(13) in tRNA = pseudouridine(13) in tRNA. Its function is as follows. Responsible for synthesis of pseudouridine from uracil-13 in transfer RNAs. The sequence is that of tRNA pseudouridine synthase D from Helicobacter acinonychis (strain Sheeba).